A 433-amino-acid chain; its full sequence is Enolase (433 aa).

(2R)-2-phosphoglycerate is bound at residue Gln167. Catalysis depends on Glu209, which acts as the Proton donor. 3 residues coordinate Mg(2+): Asp246, Glu291, and Asp318. (2R)-2-phosphoglycerate-binding residues include Lys343, Arg372, Ser373, and Lys394. The active-site Proton acceptor is the Lys343.

It belongs to the enolase family. Component of the RNA degradosome, a multiprotein complex involved in RNA processing and mRNA degradation. It depends on Mg(2+) as a cofactor.

It localises to the cytoplasm. The protein resides in the secreted. It is found in the cell surface. It catalyses the reaction (2R)-2-phosphoglycerate = phosphoenolpyruvate + H2O. It functions in the pathway carbohydrate degradation; glycolysis; pyruvate from D-glyceraldehyde 3-phosphate: step 4/5. Catalyzes the reversible conversion of 2-phosphoglycerate (2-PG) into phosphoenolpyruvate (PEP). It is essential for the degradation of carbohydrates via glycolysis. This chain is Enolase, found in Vibrio vulnificus (strain YJ016).